The chain runs to 448 residues: Trigger factor (448 aa).

Positions 167-253 (GSIVRVDFVE…VKDIKRRDIP (87 aa)) constitute a PPIase FKBP-type domain.

It belongs to the FKBP-type PPIase family. Tig subfamily.

It is found in the cytoplasm. The catalysed reaction is [protein]-peptidylproline (omega=180) = [protein]-peptidylproline (omega=0). Involved in protein export. Acts as a chaperone by maintaining the newly synthesized protein in an open conformation. Functions as a peptidyl-prolyl cis-trans isomerase. This chain is Trigger factor, found in Borrelia duttonii (strain Ly).